The sequence spans 136 residues: MSALVYFSSSSENTHRFMQRLGLPATRIPLNERERIQVDEPYILVVPSYGGGGMAGAVPRQVIRFLNDEHNRARIRGVIASGNRNFGDAWGCAGDVIAQKCGVPWLYRFELMGTQRDIDNVRKGVNEFWQQSPRSA.

This sequence belongs to the NrdI family.

Probably involved in ribonucleotide reductase function. The chain is Protein NrdI from Salmonella typhi.